The chain runs to 170 residues: Ureidoglycolate lyase (170 aa).

Belongs to the ureidoglycolate lyase family. In terms of assembly, homodimer. It depends on Ni(2+) as a cofactor.

It carries out the reaction (S)-ureidoglycolate = urea + glyoxylate. Its pathway is nitrogen metabolism; (S)-allantoin degradation. Its function is as follows. Catalyzes the catabolism of the allantoin degradation intermediate (S)-ureidoglycolate, generating urea and glyoxylate. Involved in the utilization of allantoin as nitrogen source. This is Ureidoglycolate lyase from Stutzerimonas stutzeri (strain A1501) (Pseudomonas stutzeri).